The primary structure comprises 77 residues: NADH-ubiquinone oxidoreductase chain 4L (77 aa).

Helical transmembrane passes span Trp15–Ser37 and Met44–Val64.

The protein belongs to the complex I subunit 4L family.

The protein resides in the mitochondrion membrane. It catalyses the reaction a ubiquinone + NADH + 5 H(+)(in) = a ubiquinol + NAD(+) + 4 H(+)(out). In terms of biological role, core subunit of the mitochondrial membrane respiratory chain NADH dehydrogenase (Complex I) that is believed to belong to the minimal assembly required for catalysis. Complex I functions in the transfer of electrons from NADH to the respiratory chain. The immediate electron acceptor for the enzyme is believed to be ubiquinone. This is NADH-ubiquinone oxidoreductase chain 4L from Caenorhabditis elegans.